Consider the following 291-residue polypeptide: Oxidative stress-responsive serine-rich protein 1 (291 aa).

A disordered region spans residues 29-139 (ISLSVGEGPS…NAGENSTSLD (111 aa)). Residues 65–83 (STRKSSRGAVRTQRRRRSK) are compositionally biased toward basic residues. The span at 95–105 (CSTTAPPSSSQ) shows a compositional bias: polar residues. Phosphothreonine is present on Thr-143.

This is Oxidative stress-responsive serine-rich protein 1 (Oser1) from Mus musculus (Mouse).